The chain runs to 279 residues: Undecaprenyl-diphosphatase (279 aa).

8 consecutive transmembrane segments (helical) span residues 2 to 22 (LIIE…TEWL), 44 to 64 (AFIE…VMLI), 85 to 105 (WQLW…AVPL), 113 to 133 (FYFM…FIWI), 163 to 183 (VLSI…AIIL), 188 to 208 (TVAA…YSGL), 223 to 243 (AQVL…LLAI), and 255 to 275 (FTIF…YSFF).

Belongs to the UppP family.

It localises to the cell membrane. It carries out the reaction di-trans,octa-cis-undecaprenyl diphosphate + H2O = di-trans,octa-cis-undecaprenyl phosphate + phosphate + H(+). In terms of biological role, catalyzes the dephosphorylation of undecaprenyl diphosphate (UPP). Confers resistance to bacitracin. This is Undecaprenyl-diphosphatase from Streptococcus pyogenes serotype M28 (strain MGAS6180).